Consider the following 579-residue polypeptide: L-arabinonate dehydratase (579 aa).

A [2Fe-2S] cluster-binding site is contributed by C59. A Mg(2+)-binding site is contributed by E91. C127 serves as a coordination point for [2Fe-2S] cluster. Mg(2+) is bound at residue D128. C200 is a [2Fe-2S] cluster binding site. A Mg(2+)-binding site is contributed by E453.

It belongs to the IlvD/Edd family. Homotetramer. [2Fe-2S] cluster serves as cofactor. The cofactor is Mg(2+).

The enzyme catalyses L-arabinonate = 2-dehydro-3-deoxy-L-arabinonate + H2O. It catalyses the reaction D-galactonate = 2-dehydro-3-deoxy-D-galactonate + H2O. It carries out the reaction D-fuconate = 2-dehydro-3-deoxy-D-fuconate + H2O. It functions in the pathway carbohydrate metabolism. Catalyzes the dehydration of L-arabinonate to 2-dehydro-3-deoxy-L-arabinonate during L-arabinose degradation. Can also dehydrate D-galactonate and D-fuconate with good catalytic efficiency. Has weak activity with D-xylonate and D-gluconate. The chain is L-arabinonate dehydratase from Rhizobium leguminosarum bv. trifolii (strain WSM2304).